The sequence spans 371 residues: Phosphate acyltransferase (371 aa).

The protein belongs to the PlsX family. As to quaternary structure, homodimer. Probably interacts with PlsY.

The protein resides in the cytoplasm. It carries out the reaction a fatty acyl-[ACP] + phosphate = an acyl phosphate + holo-[ACP]. It functions in the pathway lipid metabolism; phospholipid metabolism. In terms of biological role, catalyzes the reversible formation of acyl-phosphate (acyl-PO(4)) from acyl-[acyl-carrier-protein] (acyl-ACP). This enzyme utilizes acyl-ACP as fatty acyl donor, but not acyl-CoA. This is Phosphate acyltransferase from Polaromonas sp. (strain JS666 / ATCC BAA-500).